Here is an 883-residue protein sequence, read N- to C-terminus: Integrator complex subunit 6-B (883 aa).

In terms of domain architecture, VWFA spans 3 to 227; the sequence is ILLFLLDTSA…QCLESLVQKI (225 aa). Residues 626-633 carry the Inhibitory loop motif; sequence MMIDEADE.

It belongs to the Integrator subunit 6 family. As to quaternary structure, component of the Integrator complex, composed of core subunits INTS1, INTS2, INTS3, INTS4, INTS5, INTS6, INTS7, INTS8, INTS9/RC74, INTS10, INTS11/CPSF3L, INTS12, INTS13, INTS14 and INTS15. The core complex associates with protein phosphatase 2A subunits PPP2CA and PPP2R1A, to form the Integrator-PP2A (INTAC) complex.

The protein resides in the nucleus. The protein localises to the chromosome. Functionally, component of the integrator complex, a multiprotein complex that terminates RNA polymerase II (Pol II) transcription in the promoter-proximal region of genes. The integrator complex provides a quality checkpoint during transcription elongation by driving premature transcription termination of transcripts that are unfavorably configured for transcriptional elongation: the complex terminates transcription by (1) catalyzing dephosphorylation of the C-terminal domain (CTD) of Pol II subunit POLR2A/RPB1 and SUPT5H/SPT5, (2) degrading the exiting nascent RNA transcript via endonuclease activity and (3) promoting the release of Pol II from bound DNA. The integrator complex is also involved in terminating the synthesis of non-coding Pol II transcripts, such as enhancer RNAs (eRNAs), small nuclear RNAs (snRNAs), telomerase RNAs and long non-coding RNAs (lncRNAs). Within the integrator complex, INTS6 acts as a molecular adapter that promotes assembly of protein phosphatase 2A (PP2A) subunits to the integrator core complex, promoting recruitment of PP2A to transcription pause-release checkpoint. The chain is Integrator complex subunit 6-B (ints6-b) from Xenopus laevis (African clawed frog).